Consider the following 419-residue polypeptide: CinA-like protein (419 aa).

Belongs to the CinA family.

The protein is CinA-like protein of Acaryochloris marina (strain MBIC 11017).